We begin with the raw amino-acid sequence, 371 residues long: Leucine-rich repeat-containing protein 2 (371 aa).

LRR repeat units lie at residues 122–143 (HLRE…IQLF), 145–166 (AMRI…IGCL), 168–189 (NLKE…LGDC), 191–214 (NLER…SNLK), 215–235 (QVTF…CVLR), 238–260 (NLQW…DRLE), 261–283 (ELQS…LNLK), 284–305 (KLTL…LCDS), and 308–329 (PLKF…DGNE).

The polypeptide is Leucine-rich repeat-containing protein 2 (LRRC2) (Homo sapiens (Human)).